The chain runs to 323 residues: Small ribosomal subunit protein uS9m (323 aa).

Residues 298–323 (TRDARKVERKKPGKVKARKSPTWVKR) form a disordered region. The span at 304-323 (VERKKPGKVKARKSPTWVKR) shows a compositional bias: basic residues.

Belongs to the universal ribosomal protein uS9 family.

The protein resides in the mitochondrion. This chain is Small ribosomal subunit protein uS9m (MRPS9), found in Debaryomyces hansenii (strain ATCC 36239 / CBS 767 / BCRC 21394 / JCM 1990 / NBRC 0083 / IGC 2968) (Yeast).